The primary structure comprises 148 residues: UPF0178 protein Mlg_1612 (148 aa).

The protein belongs to the UPF0178 family.

The protein is UPF0178 protein Mlg_1612 of Alkalilimnicola ehrlichii (strain ATCC BAA-1101 / DSM 17681 / MLHE-1).